The primary structure comprises 264 residues: Thymidylate synthase (264 aa).

R21 serves as a coordination point for dUMP. A (6R)-5,10-methylene-5,6,7,8-tetrahydrofolate-binding site is contributed by H51. A dUMP-binding site is contributed by 126 to 127; that stretch reads RR. The active-site Nucleophile is the C146. DUMP-binding positions include 166–169, N177, and 207–209; these read RSAD and HLY. Residue D169 coordinates (6R)-5,10-methylene-5,6,7,8-tetrahydrofolate. Residue A263 coordinates (6R)-5,10-methylene-5,6,7,8-tetrahydrofolate.

The protein belongs to the thymidylate synthase family. Bacterial-type ThyA subfamily. As to quaternary structure, homodimer.

Its subcellular location is the cytoplasm. The enzyme catalyses dUMP + (6R)-5,10-methylene-5,6,7,8-tetrahydrofolate = 7,8-dihydrofolate + dTMP. The protein operates within pyrimidine metabolism; dTTP biosynthesis. Functionally, catalyzes the reductive methylation of 2'-deoxyuridine-5'-monophosphate (dUMP) to 2'-deoxythymidine-5'-monophosphate (dTMP) while utilizing 5,10-methylenetetrahydrofolate (mTHF) as the methyl donor and reductant in the reaction, yielding dihydrofolate (DHF) as a by-product. This enzymatic reaction provides an intracellular de novo source of dTMP, an essential precursor for DNA biosynthesis. The chain is Thymidylate synthase from Chelativorans sp. (strain BNC1).